The sequence spans 195 residues: Molybdenum cofactor guanylyltransferase (195 aa).

GTP-binding positions include 12-14 (LAG), K25, N53, D70, and D100. D100 lines the Mg(2+) pocket.

The protein belongs to the MobA family. As to quaternary structure, monomer. It depends on Mg(2+) as a cofactor.

The protein localises to the cytoplasm. The catalysed reaction is Mo-molybdopterin + GTP + H(+) = Mo-molybdopterin guanine dinucleotide + diphosphate. Transfers a GMP moiety from GTP to Mo-molybdopterin (Mo-MPT) cofactor (Moco or molybdenum cofactor) to form Mo-molybdopterin guanine dinucleotide (Mo-MGD) cofactor. The chain is Molybdenum cofactor guanylyltransferase from Vibrio campbellii (strain ATCC BAA-1116).